The sequence spans 260 residues: Ubiquinone/menaquinone biosynthesis C-methyltransferase UbiE (260 aa).

Residues threonine 83, aspartate 104, and 132-133 (NA) each bind S-adenosyl-L-methionine.

It belongs to the class I-like SAM-binding methyltransferase superfamily. MenG/UbiE family.

It carries out the reaction a 2-demethylmenaquinol + S-adenosyl-L-methionine = a menaquinol + S-adenosyl-L-homocysteine + H(+). The catalysed reaction is a 2-methoxy-6-(all-trans-polyprenyl)benzene-1,4-diol + S-adenosyl-L-methionine = a 5-methoxy-2-methyl-3-(all-trans-polyprenyl)benzene-1,4-diol + S-adenosyl-L-homocysteine + H(+). It functions in the pathway quinol/quinone metabolism; menaquinone biosynthesis; menaquinol from 1,4-dihydroxy-2-naphthoate: step 2/2. The protein operates within cofactor biosynthesis; ubiquinone biosynthesis. Methyltransferase required for the conversion of demethylmenaquinol (DMKH2) to menaquinol (MKH2) and the conversion of 2-polyprenyl-6-methoxy-1,4-benzoquinol (DDMQH2) to 2-polyprenyl-3-methyl-6-methoxy-1,4-benzoquinol (DMQH2). This chain is Ubiquinone/menaquinone biosynthesis C-methyltransferase UbiE, found in Bartonella quintana (strain Toulouse) (Rochalimaea quintana).